Here is a 235-residue protein sequence, read N- to C-terminus: Phosphoribosylaminoimidazole-succinocarboxamide synthase (235 aa).

Belongs to the SAICAR synthetase family.

It catalyses the reaction 5-amino-1-(5-phospho-D-ribosyl)imidazole-4-carboxylate + L-aspartate + ATP = (2S)-2-[5-amino-1-(5-phospho-beta-D-ribosyl)imidazole-4-carboxamido]succinate + ADP + phosphate + 2 H(+). Its pathway is purine metabolism; IMP biosynthesis via de novo pathway; 5-amino-1-(5-phospho-D-ribosyl)imidazole-4-carboxamide from 5-amino-1-(5-phospho-D-ribosyl)imidazole-4-carboxylate: step 1/2. This Nautilia profundicola (strain ATCC BAA-1463 / DSM 18972 / AmH) protein is Phosphoribosylaminoimidazole-succinocarboxamide synthase.